Reading from the N-terminus, the 513-residue chain is Voltage-gated potassium channel regulatory subunit KCNG1 (513 aa).

Residues 1-224 lie on the Cytoplasmic side of the membrane; that stretch reads MTLLPGDNSD…DMVERPHSGL (224 aa). Positions 184 to 204 are disordered; it reads EEDDALDSEGRDSEGPAEGEG. The segment covering 191–204 has biased composition (basic and acidic residues); that stretch reads SEGRDSEGPAEGEG. Residues 225–246 traverse the membrane as a helical segment; sequence PGKVFACLSVLFVTVTAVNLSV. Residues 247-267 lie on the Extracellular side of the membrane; that stretch reads STLPSLREEEEQGHCSQMCHN. A helical transmembrane segment spans residues 268-289; that stretch reads VFIVESVCVGWFSLEFLLRLIQ. Residues 290-300 lie on the Cytoplasmic side of the membrane; it reads APSKFAFLRSP. A helical transmembrane segment spans residues 301–321; that stretch reads LTLIDLVAILPYYITLLVDGA. Residues 322–338 are Extracellular-facing; it reads AAGRRKPGAGNSYLDKV. A helical; Voltage-sensor transmembrane segment spans residues 339 to 359; it reads GLVLRVLRALRILYVMRLARH. At 360–374 the chain is on the cytoplasmic side; it reads SLGLQTLGLTARRCT. The chain crosses the membrane as a helical span at residues 375-396; it reads REFGLLLLFLCVAIALFAPLLY. The Extracellular segment spans residues 397 to 411; that stretch reads VIENEMADSPEFTSI. The segment at residues 412–423 is an intramembrane region (helical); sequence PACYWWAVITMT. Positions 424–429 match the Selectivity filter motif; sequence TVGYGD. Residues 424–431 lie within the membrane without spanning it; sequence TVGYGDMV. At 432-438 the chain is on the extracellular side; the sequence is PRSTPGQ. The chain crosses the membrane as a helical span at residues 439 to 467; sequence VVALSSILSGILLMAFPVTSIFHTFSRSY. At 468–513 the chain is on the cytoplasmic side; the sequence is LELKQEQERVMFRRAQFLIKTKSQLSVSQDSDILFGSASSDTRDNN.

This sequence belongs to the potassium channel family. G (TC 1.A.1.2) subfamily. Kv6.1/KCNG1 sub-subfamily. As to quaternary structure, heterotetramer with KCNB1. Heterotetramer with KCNB2. As to expression, expressed in brain and placenta, and at much lower levels in kidney and pancreas.

The protein localises to the cell membrane. Its function is as follows. Regulatory alpha-subunit of the voltage-gated potassium (Kv) channel which, when coassembled with KCNB1 or KCNB2, can modulate their expression and their gating kinetics by acting on deactivation upon repolarization and inactivation during maintained depolarization. Potassium channel subunit that does not form functional channels by itself. The protein is Voltage-gated potassium channel regulatory subunit KCNG1 of Homo sapiens (Human).